The following is a 166-amino-acid chain: Regulatory protein RecX (166 aa).

The protein belongs to the RecX family.

The protein resides in the cytoplasm. In terms of biological role, modulates RecA activity. This chain is Regulatory protein RecX, found in Salmonella agona (strain SL483).